We begin with the raw amino-acid sequence, 106 residues long: UPF0213 protein KPN78578_35340 (106 aa).

The GIY-YIG domain maps to 13-88 (VCWFLYLIRT…KQLTKREKER (76 aa)).

Belongs to the UPF0213 family.

The polypeptide is UPF0213 protein KPN78578_35340 (Klebsiella pneumoniae subsp. pneumoniae (strain ATCC 700721 / MGH 78578)).